We begin with the raw amino-acid sequence, 356 residues long: D-xylulose reductase (356 aa).

The Zn(2+) site is built by Cys44, His69, and Glu155. 179–184 (GAGPIG) serves as a coordination point for NAD(+).

Belongs to the zinc-containing alcohol dehydrogenase family. Zn(2+) serves as cofactor.

It carries out the reaction xylitol + NAD(+) = D-xylulose + NADH + H(+). The protein operates within carbohydrate degradation; L-arabinose degradation via L-arabinitol; D-xylulose 5-phosphate from L-arabinose (fungal route): step 4/5. The polypeptide is D-xylulose reductase (XYL2) (Saccharomyces cerevisiae (strain ATCC 204508 / S288c) (Baker's yeast)).